The primary structure comprises 500 residues: Cytochrome P450 2D26 (500 aa).

At Ser-249 the chain carries Phosphoserine. Cys-446 provides a ligand contact to heme.

Belongs to the cytochrome P450 family. The cofactor is heme.

It is found in the endoplasmic reticulum membrane. It localises to the microsome membrane. It carries out the reaction an organic molecule + reduced [NADPH--hemoprotein reductase] + O2 = an alcohol + oxidized [NADPH--hemoprotein reductase] + H2O + H(+). Its function is as follows. Cytochromes P450 are a group of heme-thiolate monooxygenases. In liver microsomes, this enzyme is involved in an NADPH-dependent electron transport pathway. It oxidizes a variety of structurally unrelated compounds, including steroids, fatty acids, and xenobiotics. The polypeptide is Cytochrome P450 2D26 (Cyp2d26) (Rattus norvegicus (Rat)).